A 240-amino-acid chain; its full sequence is UDP-2,3-diacylglucosamine hydrolase (240 aa).

Positions 8, 10, 41, 79, and 114 each coordinate Mn(2+). 79 to 80 (NR) lines the substrate pocket. 5 residues coordinate substrate: Asp122, Ser160, Asn164, Lys167, and His195. Mn(2+)-binding residues include His195 and His197.

It belongs to the LpxH family. Requires Mn(2+) as cofactor.

The protein localises to the cell inner membrane. It carries out the reaction UDP-2-N,3-O-bis[(3R)-3-hydroxytetradecanoyl]-alpha-D-glucosamine + H2O = 2-N,3-O-bis[(3R)-3-hydroxytetradecanoyl]-alpha-D-glucosaminyl 1-phosphate + UMP + 2 H(+). It functions in the pathway glycolipid biosynthesis; lipid IV(A) biosynthesis; lipid IV(A) from (3R)-3-hydroxytetradecanoyl-[acyl-carrier-protein] and UDP-N-acetyl-alpha-D-glucosamine: step 4/6. Functionally, hydrolyzes the pyrophosphate bond of UDP-2,3-diacylglucosamine to yield 2,3-diacylglucosamine 1-phosphate (lipid X) and UMP by catalyzing the attack of water at the alpha-P atom. Involved in the biosynthesis of lipid A, a phosphorylated glycolipid that anchors the lipopolysaccharide to the outer membrane of the cell. This is UDP-2,3-diacylglucosamine hydrolase from Escherichia coli (strain UTI89 / UPEC).